The chain runs to 423 residues: G protein-activated inward rectifier potassium channel 2 (423 aa).

Residues 1-89 (MAKLTESMTN…IFTTLVDLKW (89 aa)) lie on the Cytoplasmic side of the membrane. Residues serine 16 and serine 23 each carry the phosphoserine modification. A helical transmembrane segment spans residues 90 to 114 (RFNLLIFVMVYTVTWLFFGMIWWLI). The Extracellular portion of the chain corresponds to 115 to 138 (AYIRGDMDHIEDPSWTPCVTNLNG). Residues 139–150 (FVSAFLFSIETE) constitute an intramembrane region (helical; Pore-forming). The pore-forming intramembrane region spans 151–157 (TTIGYGY). The Selectivity filter motif lies at 152–157 (TIGYGY). Topologically, residues 158–166 (RVITDKCPE) are extracellular. A helical membrane pass occupies residues 167-188 (GIILLLIQSVLGSIVNAFMVGC). The Cytoplasmic portion of the chain corresponds to 189-423 (MFVKISQPKK…VANLENESKV (235 aa)). The tract at residues 390–423 (NQHAELETEEEEKNLEEQTERNGDVANLENESKV) is disordered. Positions 420 to 423 (ESKV) match the PDZ-binding motif.

Belongs to the inward rectifier-type potassium channel (TC 1.A.2.1) family. KCNJ6 subfamily. As to quaternary structure, associates with KCNJ3/GIRK1 or KCNJ5/GRIK4 to form a G-protein-activated heteromultimer pore-forming unit. The resulting inward current is much larger. Interacts (via PDZ-binding motif) with SNX27 (via PDZ domain); the interaction is required when endocytosed to prevent degradation in lysosomes and promote recycling to the plasma membrane.

It localises to the membrane. The enzyme catalyses K(+)(in) = K(+)(out). Activated by phosphatidylinositol 4,5 biphosphate (PtdIns(4,5)P2). Functionally, inward rectifier potassium channels are characterized by a greater tendency to allow potassium to flow into the cell rather than out of it. Their voltage dependence is regulated by the concentration of extracellular potassium; as external potassium is raised, the voltage range of the channel opening shifts to more positive voltages. The inward rectification is mainly due to the blockage of outward current by internal magnesium. This potassium channel may be involved in the regulation of insulin secretion by glucose and/or neurotransmitters acting through G-protein-coupled receptors. This Pongo abelii (Sumatran orangutan) protein is G protein-activated inward rectifier potassium channel 2 (KCNJ6).